The following is a 418-amino-acid chain: DnaJ protein homolog 2 (418 aa).

Residues 11 to 76 (NTKYYEVLGV…REIYDQYGEE (66 aa)) form the J domain. The CR-type zinc-finger motif lies at 135–219 (GTSKKLSLSR…CKGEKVVQQK (85 aa)). CXXCXGXG motif repeat units follow at residues 148–155 (CTKCKGKG), 164–171 (CASCQGSG), 191–198 (CNECKGTG), and 207–214 (CPQCKGEK). Positions 382-418 (VNIEEEMRRKQHQQAQEAYDEDDEGHGGAQRVQCAQQ) are disordered. C415 bears the Cysteine methyl ester mark. C415 carries the S-farnesyl cysteine lipid modification. A propeptide spans 416-418 (AQQ) (removed in mature form).

It localises to the membrane. Plays a continuous role in plant development probably in the structural organization of compartments. This Allium porrum (Leek) protein is DnaJ protein homolog 2 (LDJ2).